A 112-amino-acid chain; its full sequence is ATP synthase epsilon chain (112 aa).

It belongs to the ATPase epsilon chain family. In terms of assembly, F-type ATPases have 2 components, CF(1) - the catalytic core - and CF(0) - the membrane proton channel. CF(1) has five subunits: alpha(3), beta(3), gamma(1), delta(1), epsilon(1). CF(0) has three main subunits: a, b and c.

Its subcellular location is the cell inner membrane. Produces ATP from ADP in the presence of a proton gradient across the membrane. This chain is ATP synthase epsilon chain, found in Rickettsia peacockii (strain Rustic).